The chain runs to 338 residues: Lipoate-protein ligase A (338 aa).

The BPL/LPL catalytic domain occupies 29–216 (PATQRVLFLW…AFFAHYGERV (188 aa)). ATP is bound by residues arginine 71, 76-79 (GAVF), and lysine 134. Residue lysine 134 coordinates (R)-lipoate.

It belongs to the LplA family. As to quaternary structure, monomer.

Its subcellular location is the cytoplasm. The enzyme catalyses L-lysyl-[lipoyl-carrier protein] + (R)-lipoate + ATP = N(6)-[(R)-lipoyl]-L-lysyl-[lipoyl-carrier protein] + AMP + diphosphate + H(+). It participates in protein modification; protein lipoylation via exogenous pathway; protein N(6)-(lipoyl)lysine from lipoate: step 1/2. The protein operates within protein modification; protein lipoylation via exogenous pathway; protein N(6)-(lipoyl)lysine from lipoate: step 2/2. Catalyzes both the ATP-dependent activation of exogenously supplied lipoate to lipoyl-AMP and the transfer of the activated lipoyl onto the lipoyl domains of lipoate-dependent enzymes. In Salmonella choleraesuis (strain SC-B67), this protein is Lipoate-protein ligase A.